Reading from the N-terminus, the 731-residue chain is Vezatin (731 aa).

The next 2 membrane-spanning stretches (helical) occupy residues 91–111 (LATP…LLVM) and 114–134 (TWWI…YLVI). Residues 382 to 414 (VRSLQLHLKALLNEVIILEDELEKLVCTKETQE) are a coiled coil. Disordered regions lie at residues 570–671 (PVDP…DSLQ) and 710–731 (QTFG…IEEK). A compositionally biased stretch (polar residues) spans 577-586 (ISNSEPSMNS). Residues 590 to 601 (KVSKNDTEEESS) are compositionally biased toward basic and acidic residues. A compositionally biased stretch (polar residues) spans 658-671 (GLTTAPPTPRDSLQ). Acidic residues predominate over residues 712–721 (FGDEEEEQII). Basic and acidic residues predominate over residues 722–731 (EENKNKIEEK).

The protein belongs to the vezatin family. Interacts with USH2A (via the cytoplasmic region); the interaction associates VEZT with the USH2 complex at the stereocilia base. Interacts with myosin MYO7A and the cadherin-catenins complex.

Its subcellular location is the cell membrane. It is found in the cell projection. The protein resides in the stereocilium membrane. The protein localises to the cell junction. It localises to the adherens junction. Its subcellular location is the nucleus. It is found in the cytoplasmic vesicle. The protein resides in the secretory vesicle. The protein localises to the acrosome. Its function is as follows. Plays a pivotal role in the establishment of adherens junctions and their maintenance in adult life. Required for morphogenesis of the preimplantation embryo, and for the implantation process. The chain is Vezatin (VEZT) from Pongo abelii (Sumatran orangutan).